Here is a 492-residue protein sequence, read N- to C-terminus: Chitooligosaccharide oxidase (492 aa).

Positions 1 to 19 are cleaved as a signal peptide; that stretch reads MHFNTLTCVLVGLVAHTSA. The 173-residue stretch at 57–229 folds into the FAD-binding PCMH-type domain; the sequence is LPFEPAAIAV…VELEFQTFAA (173 aa). Residues 94-154 constitute a cross-link (6-(S-cysteinyl)-8alpha-(pros-histidyl)-FAD (His-Cys)); sequence HSYTSLGFGG…GKRALAHGTC (61 aa).

This sequence belongs to the oxygen-dependent FAD-linked oxidoreductase family. Requires FAD as cofactor. The FAD cofactor is bound via a bicovalent 6-S-cysteinyl, 8alpha-N1-histidyl FAD linkage.

It localises to the secreted. The enzyme catalyses N,N'-diacetylchitobiose + O2 = N,N'-diacetylchitobiono-1,5-lactone + H2O2. The catalysed reaction is N,N',N''-triacetylchitotriose + O2 = N,N',N''-triacetylchitotriono-1,5-lactone + H2O2. It carries out the reaction N,N',N'',N'''-tetraacetylchitotetraose + O2 = N,N',N'',N'''-tetraacetylchitotetraono-1,5-lactone + H2O2. Its function is as follows. Catalyzes the selective oxidation of C1 hydroxyl moieties on chitooligosaccharides with concomitant reduction of molecular oxygen to hydrogen peroxide. This results in the formation of the corresponding lactones, which typically undergo spontaneous hydrolysis. Chitooligosaccharides are homo- or heterooligomers of N-acetylglucosamine (GlcNAc) and D-glucosamine which are linked through beta-1,4-glycosidic bonds. For optimal substrate binding at least 2 GlcNAc units are needed, and chitooligosaccharide oxidase is most efficient on chitobiose, chitotriose and chitotetraose. This is Chitooligosaccharide oxidase from Gibberella zeae (strain ATCC MYA-4620 / CBS 123657 / FGSC 9075 / NRRL 31084 / PH-1) (Wheat head blight fungus).